A 188-amino-acid chain; its full sequence is MPKASELKKGFAIISNGKTLLIKDIEVTTPGGRGGSKIYKLRCTDLNTGARVDERYKSDDVLDTVEMNKRPISFSYIDGDEYVFMNNDDYTPYNFKKDEIEDELLFITEEIQGMSVVLVDGEAVAIELPSSVEMVIEETDPSIKGASASSRTKPARMPTGLVVQVPEYIATGDRIVINTAERKFMNRA.

Belongs to the elongation factor P family.

This is Elongation factor P-like protein from Vibrio cholerae serotype O1 (strain ATCC 39541 / Classical Ogawa 395 / O395).